The chain runs to 323 residues: Fructose-1,6-bisphosphatase class 1 (323 aa).

Residues glutamate 88, aspartate 107, leucine 109, and aspartate 110 each contribute to the Mg(2+) site. Residues 110–113 (DGSS) and asparagine 200 contribute to the substrate site. A Mg(2+)-binding site is contributed by glutamate 272.

Belongs to the FBPase class 1 family. Homotetramer. It depends on Mg(2+) as a cofactor.

The protein resides in the cytoplasm. It catalyses the reaction beta-D-fructose 1,6-bisphosphate + H2O = beta-D-fructose 6-phosphate + phosphate. It participates in carbohydrate biosynthesis; gluconeogenesis. The protein is Fructose-1,6-bisphosphatase class 1 of Acinetobacter baumannii (strain ATCC 17978 / DSM 105126 / CIP 53.77 / LMG 1025 / NCDC KC755 / 5377).